Here is a 360-residue protein sequence, read N- to C-terminus: COP9 signalosome complex subunit 5 (360 aa).

The MPN domain occupies Ala60–Asp197. 3 residues coordinate Zn(2+): His143, His145, and Asp156. The JAMM motif signature appears at His143 to Asp156. Disordered stretches follow at residues Leu293–Ser315 and Ser341–Ala360. Polar residues predominate over residues Ser341–Asp350.

It belongs to the peptidase M67A family. CSN5 subfamily. As to quaternary structure, component of the CSN complex, probably composed of CSN1, CSN2, CSN3, CSN4, CSN5, CSN6, CSN7 and CSN8. Interacts with MCM2.

In terms of biological role, probable protease subunit of the COP9 signalosome complex (CSN), a complex involved in various cellular and developmental processes such as photomorphogenesis and response to hormones. The CSN complex is an essential regulator of the ubiquitin (Ubl) conjugation pathway by mediating the deneddylation of the cullin subunits of SCF-type E3 ligase complexes, leading to decrease the Ubl ligase activity of SCF. Involved in early response to iron deficiency. The polypeptide is COP9 signalosome complex subunit 5 (Oryza sativa subsp. japonica (Rice)).